Reading from the N-terminus, the 101-residue chain is 2-amino-4-ketopentanoate thiolase alpha subunit (101 aa).

This sequence belongs to the OrtA family. As to quaternary structure, heterodimer with OrtB.

It carries out the reaction D-alanine + acetyl-CoA = (2R)-2-amino-4-oxopentanoate + CoA. With respect to regulation, completely inhibited by p-chloromercuribenzoate (p-ClHgBzO) and acetyl-CoA, and partially inhibited by N-ethylmaleimide. Its function is as follows. Involved in the ornithine fermentation pathway. Catalyzes the thiolytic cleavage of 2-amino-4-ketopentanoate (AKP) with coenzyme A (CoA) to form acetyl-CoA and alanine. It is strictly specific for AKP. The polypeptide is 2-amino-4-ketopentanoate thiolase alpha subunit (Acetoanaerobium sticklandii (strain ATCC 12662 / DSM 519 / JCM 1433 / CCUG 9281 / NCIMB 10654 / HF) (Clostridium sticklandii)).